We begin with the raw amino-acid sequence, 693 residues long: MSRKVAIPQQRNIGIMAHIDAGKTTTTERILFYTGVSHKIGETHEGQATMDWMEQEQERGITITSAATTCFWKDCRINIIDTPGHVDFTIEVERALRVLDGAVAVFDAVAGVEPQSETVWRQADRYKVPRICFVNKMDRMGANFFRCVDMIRDRLKAKPLALQVPIGSEDEFQGIVDLVTGKAVVFDKASKGAEFAVTGVPAELQDQFDVMRLELIEAVAEEDDALMEKYLGGEELTEEEIHSAIRRATIARTAVPVLCGSAFRNMGVQPLLDAVVEYLPSPVDIEQMVGANPDNEEEKIVCPCKDEEPLAALVFKLASDPYIGHLSFIRIYSGFIEAGMTVYNANTGKKERIGRLLKMHANKREEIKWAGAGDIVAAVGLKQVSTGDTICEINRPVVLESLDIPEPVIEVAIEPKTKADRDALSAALAKLAKEDPSFRVKGDDETNQTLIAGMGELHLDIIVDRLTREFSVNANVGKPQVAYRETISKETKVDHKYAKQSGGRGQYGHVVIEVEPNPEKGYLFENKITGGVIPKEYIPAVDKGIQDALKSGVLAGYPMVDVKVALVFGSYHEVDSSEQAFYVAGSMAVKEAARKASPVLLEPVMDVEVVTPEEYLGDVMGDLNGRRGKIQSMDSRAGAQVIRCHVPLSEMFGYATDLRSRTQGRANFTMQFDHYERVPANLAEELTKSKSGE.

The tr-type G domain occupies 8–283 (PQQRNIGIMA…AVVEYLPSPV (276 aa)). GTP-binding positions include 17-24 (AHIDAGKT), 81-85 (DTPGH), and 135-138 (NKMD).

Belongs to the TRAFAC class translation factor GTPase superfamily. Classic translation factor GTPase family. EF-G/EF-2 subfamily.

Its subcellular location is the cytoplasm. In terms of biological role, catalyzes the GTP-dependent ribosomal translocation step during translation elongation. During this step, the ribosome changes from the pre-translocational (PRE) to the post-translocational (POST) state as the newly formed A-site-bound peptidyl-tRNA and P-site-bound deacylated tRNA move to the P and E sites, respectively. Catalyzes the coordinated movement of the two tRNA molecules, the mRNA and conformational changes in the ribosome. The protein is Elongation factor G of Oleidesulfovibrio alaskensis (strain ATCC BAA-1058 / DSM 17464 / G20) (Desulfovibrio alaskensis).